We begin with the raw amino-acid sequence, 152 residues long: Deoxyuridine 5'-triphosphate nucleotidohydrolase (152 aa).

Substrate-binding positions include 71–73 (RSG), Asn-84, 88–90 (LID), and Met-98.

This sequence belongs to the dUTPase family. Mg(2+) serves as cofactor.

It catalyses the reaction dUTP + H2O = dUMP + diphosphate + H(+). Its pathway is pyrimidine metabolism; dUMP biosynthesis; dUMP from dCTP (dUTP route): step 2/2. This enzyme is involved in nucleotide metabolism: it produces dUMP, the immediate precursor of thymidine nucleotides and it decreases the intracellular concentration of dUTP so that uracil cannot be incorporated into DNA. The sequence is that of Deoxyuridine 5'-triphosphate nucleotidohydrolase from Shewanella sediminis (strain HAW-EB3).